The chain runs to 160 residues: Transcriptional repressor NrdR (160 aa).

Residues 1-11 are compositionally biased toward polar residues; that stretch reads MRCPNCNSLDT. Residues 1-20 are disordered; the sequence is MRCPNCNSLDTQVKDSRPTE. Residues 3–34 fold into a zinc finger; it reads CPNCNSLDTQVKDSRPTEDSSVIRRRRVCVAC. The ATP-cone domain maps to 49 to 139; that stretch reads LTVIKRNGRR…VYRNFREAKD (91 aa).

The protein belongs to the NrdR family. The cofactor is Zn(2+).

In terms of biological role, negatively regulates transcription of bacterial ribonucleotide reductase nrd genes and operons by binding to NrdR-boxes. In Bradyrhizobium diazoefficiens (strain JCM 10833 / BCRC 13528 / IAM 13628 / NBRC 14792 / USDA 110), this protein is Transcriptional repressor NrdR.